A 345-amino-acid polypeptide reads, in one-letter code: Anthranilate phosphoribosyltransferase (345 aa).

5-phospho-alpha-D-ribose 1-diphosphate is bound by residues G86, 89 to 90 (GD), T94, 96 to 99 (NIST), 114 to 122 (KHGGRGVSS), and S126. G86 serves as a coordination point for anthranilate. S98 lines the Mg(2+) pocket. Anthranilate is bound at residue R172. Mg(2+) is bound by residues D231 and E232.

It belongs to the anthranilate phosphoribosyltransferase family. In terms of assembly, homodimer. Mg(2+) is required as a cofactor.

It catalyses the reaction N-(5-phospho-beta-D-ribosyl)anthranilate + diphosphate = 5-phospho-alpha-D-ribose 1-diphosphate + anthranilate. The protein operates within amino-acid biosynthesis; L-tryptophan biosynthesis; L-tryptophan from chorismate: step 2/5. In terms of biological role, catalyzes the transfer of the phosphoribosyl group of 5-phosphorylribose-1-pyrophosphate (PRPP) to anthranilate to yield N-(5'-phosphoribosyl)-anthranilate (PRA). The protein is Anthranilate phosphoribosyltransferase of Ralstonia pickettii (strain 12J).